We begin with the raw amino-acid sequence, 215 residues long: Sodium channel regulatory subunit beta-3 (215 aa).

The first 22 residues, 1–22, serve as a signal peptide directing secretion; that stretch reads MPAFNRLFPLASLLLILWVGVC. Residues 23–156 lie on the Extracellular side of the membrane; sequence FPVCVEVPSE…EEAGEDFTSV (134 aa). 2 cysteine pairs are disulfide-bonded: Cys26–Cys48 and Cys45–Cys120. Positions 32–154 constitute an Ig-like C2-type domain; the sequence is ETEAVQGNPM…VTEEAGEDFT (123 aa). Asn95, Asn109, Asn113, and Asn121 each carry an N-linked (GlcNAc...) asparagine glycan. A helical membrane pass occupies residues 157-178; it reads VSEIMMYILLVFLTLWLLIEMI. Topologically, residues 179–215 are cytoplasmic; it reads YCYRKVSKAEEAAQENASDYLAIPSENKENSAVPVEE.

This sequence belongs to the sodium channel auxiliary subunit SCN3B (TC 8.A.17) family. A voltage-gated sodium (Nav) channel consists of an ion-conducting pore-forming alpha subunit functional on its own that is regulated by one or more beta subunits. Forms homodimers and homotrimers. SCN3B is non-covalently associated with alpha subunits and induces the formation of alpha subunit oligomers, including trimers. Interacts with SCN5A/Nav1.5; regulatory subunit of SCN5A/Nav1.5. Interacts with SCN7A/Nav2.1; probable regulatory subunit of SCN7A/Nav2.1. Interacts with SCN10A; regulatory subunit of SCN10A/Nav1.8. Interacts with NFASC; probably involved in targeting the sodium channels to the nodes of Ranvier. In terms of processing, intramolecular disulfide bonds favor the voltage-gated sodium channel oligomeric complex assembly. N-glycosylated.

It localises to the cell membrane. Its function is as follows. Regulatory subunit of multiple voltage-gated sodium (Nav) channels directly mediating the depolarization of excitable membranes. Navs, also called VGSCs (voltage-gated sodium channels) or VDSCs (voltage-dependent sodium channels), operate by switching between closed and open conformations depending on the voltage difference across the membrane. In the open conformation they allow Na(+) ions to selectively pass through the pore, along their electrochemical gradient. The influx of Na+ ions provokes membrane depolarization, initiating the propagation of electrical signals throughout cells and tissues. The accessory beta subunits participate in localization and functional modulation of the Nav channels. Modulates the activity of SCN2A/Nav1.2, causing a hyperpolarizing shift in the voltage-dependence of inactivation of the channel and increasing the fraction of channels operating in the fast gating mode. Modulates the activity of SCN5A/Nav1.5. Could also regulate the atypical sodium channel SCN7A/Nav2.1. Modulates the activity of SCN10A/Nav1.8, regulating its oligomerization and accelerating the recovery from inactivation. The sequence is that of Sodium channel regulatory subunit beta-3 from Bos taurus (Bovine).